Consider the following 404-residue polypeptide: 11-beta-hydroxysteroid dehydrogenase type 2 (404 aa).

Thr-82–Ala-111 lines the NAD(+) pocket. Ser-219 is a binding site for substrate. Residue Tyr-232 is the Proton acceptor of the active site. Positions Leu-383 to Gln-404 are disordered.

The protein belongs to the short-chain dehydrogenases/reductases (SDR) family. Interacts with ligand-free cytoplasmic NR3C2. In terms of tissue distribution, highly expressed in kidney, adrenal and colon; detected at lower levels on lung, liver, and spleen. Expressed in oocytes. Expressed in uterine tissues and in corpora lutea.

The protein resides in the microsome. It is found in the endoplasmic reticulum. The catalysed reaction is an 11beta-hydroxysteroid + NAD(+) = an 11-oxosteroid + NADH + H(+). It catalyses the reaction corticosterone + NAD(+) = 11-dehydrocorticosterone + NADH + H(+). The enzyme catalyses cortisol + NAD(+) = cortisone + NADH + H(+). It carries out the reaction 11beta,17beta-dihydroxyandrost-4-ene-3-one + NAD(+) = 17beta-hydroxyandrost-4-ene-3,11-dione + NADH + H(+). The catalysed reaction is 11beta-hydroxyandrost-4-ene-3,17-dione + NAD(+) = androst-4-ene-3,11,17-trione + NADH + H(+). Its pathway is steroid metabolism. Inhibited by glycyrrhetinic acid, carbenoloxone, 11-alpha-OH-progesterone and 11-beta-OH-progesterone. Functionally, catalyzes the conversion of biologically active 11beta-hydroxyglucocorticoids (11beta-hydroxysteroid) such as cortisol, to inactive 11-ketoglucocorticoids (11-oxosteroid) such as cortisone, in the presence of NAD(+). Functions as a dehydrogenase (oxidase), thereby decreasing the concentration of active glucocorticoids, thus protecting the nonselective mineralocorticoid receptor from occupation by glucocorticoids. Affinity towards corticosterone is higher than cortisol or dexamethasone. Plays an important role in maintaining glucocorticoids balance during preimplantation and protects the fetus from excessive maternal corticosterone exposure. Catalyzes the oxidation of 11beta-hydroxytestosterone (11beta,17beta-dihydroxyandrost-4-ene-3-one) to 11-ketotestosterone (17beta-hydroxyandrost-4-ene-3,11-dione), a major bioactive androgen. Catalyzes the conversion of 11beta-hydroxyandrostenedione (11beta-hydroxyandrost-4-ene-3,17-dione) to 11-ketoandrostenedione (androst-4-ene-3,11,17-trione), which can be further metabolized to 11-ketotestosterone. Converts 7-beta-25-dihydroxycholesterol to 7-oxo-25-hydroxycholesterol in vitro. 7-beta-25-dihydroxycholesterol (not 7-oxo-25-hydroxycholesterol) acts as ligand for the G-protein-coupled receptor (GPCR) Epstein-Barr virus-induced gene 2 (EBI2) and may thereby regulate immune cell migration. May protect ovulating oocytes and fertilizing spermatozoa from the adverse effects of cortisol. In Bos taurus (Bovine), this protein is 11-beta-hydroxysteroid dehydrogenase type 2 (HSD11B2).